Consider the following 677-residue polypeptide: Envelope glycoprotein (677 aa).

Residues 1–33 form the signal peptide; the sequence is MGSGYQLLQLPRERFRKTSFLVWVIILFQRAIS. The Extracellular segment spans residues 34–651; sequence MPLGIVTNST…DLNLWTGWRQ (618 aa). A glycan (N-linked (GlcNAc...) asparagine; by host) is linked at asparagine 41. Disulfide bonds link cysteine 54/cysteine 610, cysteine 109/cysteine 136, cysteine 122/cysteine 148, cysteine 512/cysteine 557, and cysteine 602/cysteine 609. Residues 55 to 202 are receptor-binding; the sequence is RDKLSSTSQL…HFWKATPAHE (148 aa). 12 N-linked (GlcNAc...) asparagine; by host glycosylation sites follow: asparagine 205, asparagine 239, asparagine 258, asparagine 269, asparagine 297, asparagine 317, asparagine 318, asparagine 339, asparagine 406, asparagine 420, asparagine 435, and asparagine 463. The tract at residues 306-486 is mucin-like region; that stretch reads NLHFQILSTH…PSQPGFTINT (181 aa). The span at 315 to 326 shows a compositional bias: polar residues; that stretch reads HTNNSSDQSPAG. 3 disordered regions span residues 315–349, 370–482, and 489–508; these read HTNN…TDSP, NGET…QPGF, and KVAD…RQNT. Composition is skewed to polar residues over residues 370–421 and 429–472; these read NGET…ASNE and NPIQ…TSPG. A fusion peptide region spans residues 525–540; the sequence is GAAVGLAWIPYFGPAA. Positions 555-596 form a coiled coil; that stretch reads LICGLRQLANETTQALQLFLRATTELRTYSLLNRKAIDFLLQ. Residue asparagine 564 is glycosylated (N-linked (GlcNAc...) asparagine; by host). Residues 616–635 adopt a coiled-coil conformation; it reads WTKNITDEINQIKHDFIDNP. Asparagine 619 carries N-linked (GlcNAc...) asparagine; by host glycosylation. The chain crosses the membrane as a helical span at residues 652–672; that stretch reads WIPAGIGIIGVIIAIIALLCI. Residues cysteine 671 and cysteine 673 are each lipidated (S-palmitoyl cysteine; by host). Over 673–677 the chain is Cytoplasmic; sequence CKILC.

Belongs to the filoviruses glycoprotein family. In terms of assembly, homotrimer; each monomer consists of a GP1 and a GP2 subunit linked by disulfide bonds. The resulting peplomers (GP1,2) protrude from the virus surface as spikes. Interacts with host integrin alpha-V/ITGAV. Interacts with host CLEC10A. Binds also to host CD209 and CLEC4M/DC-SIGN(R). Interacts with host FOLR1. Interacts with BST2; this interaction inhibits the antiviral effect of BST2 and this allows viral release from infected cells. Interacts with host FCN1; this interaction enhances viral entry. Interacts with host TLR4; this interaction induces cell death in T-lymphocytes or proinflammatory cytokines and SOCS1 production in monocytes. As to quaternary structure, interacts with host entry receptor NPC1. GP1 and GP2delta are part of GP1,2delta soluble complexes released by ectodomain shedding. In terms of processing, the signal peptide region modulates GP's high mannose glycosylation, thereby determining the efficiency of the interactions with DC-SIGN(R). N-glycosylated. Post-translationally, O-glycosylated in the mucin-like region. In terms of processing, palmitoylation of GP2 is not required for its function. Specific enzymatic cleavages in vivo yield mature proteins. The precursor is processed into GP1 and GP2 by host cell furin in the trans Golgi, and maybe by other host proteases, to yield the mature GP1 and GP2 proteins. The cleavage site corresponds to the furin optimal cleavage sequence [KR]-X-[KR]-R. This cleavage does not seem to be required for function. After the internalization of the virus into cell endosomes, GP1 C-terminus is removed by the endosomal proteases cathepsin B, cathepsin L, or both, leaving a 19-kDa N-terminal fragment which is further digested by cathepsin B. Proteolytic processing of GP1,2 by host ADAM17 can remove the transmembrane anchor of GP2 and leads to shedding of complexes consisting in GP1 and truncated GP2 (GP1,2delta).

Its subcellular location is the virion membrane. It localises to the host cell membrane. The protein localises to the secreted. Functionally, trimeric GP1,2 complexes form the virion surface spikes and mediate the viral entry processes, with GP1 acting as the receptor-binding subunit and GP2 as the membrane fusion subunit. At later times of infection, down-regulates the expression of various host cell surface molecules that are essential for immune surveillance and cell adhesion. Down-modulates several integrins including ITGA1, ITGA2, ITGA3, ITGA4, ITGA5, ITGA6, ITGAV and ITGB1. This decrease in cell adhesion molecules may lead to cell detachment, contributing to the disruption of blood vessel integrity and hemorrhages developed during infection (cytotoxicity). Interacts with host TLR4 and thereby stimulates the differentiation and activation of monocytes leading to bystander death of T-lymphocytes. Down-regulates as well the function of host natural killer cells. Counteracts the antiviral effect of host BST2/tetherin that restricts release of progeny virions from infected cells. However, cooperates with VP40 and host BST2 to activate canonical NF-kappa-B pathway in a manner dependent on neddylation. Functions as a decoy for anti-GP1,2 antibodies thereby contributing to viral immune evasion. Interacts and activates host macrophages and dendritic cells inducing up-regulation of cytokine transcription. This effect is mediated throught activation of host TLR4. In terms of biological role, responsible for binding to the receptor(s) on target cells. Interacts with CD209/DC-SIGN and CLEC4M/DC-SIGNR which act as cofactors for virus entry into dendritic cells (DCs) and endothelial cells. Binding to the macrophage specific lectin CLEC10A also seems to enhance virus infectivity. Interaction with FOLR1/folate receptor alpha may be a cofactor for virus entry in some cell types, although results are contradictory. Members of the Tyro3 receptor tyrosine kinase family also seem to be cell entry factors in filovirus infection. Once attached, the virions are internalized through clathrin-dependent endocytosis and/or macropinocytosis. After internalization of the virus into the endosomes of the host cell, proteolysis of GP1 by two cysteine proteases, CTSB/cathepsin B and CTSL/cathepsin L removes the glycan cap and allows GP1 binding to the host entry receptor NPC1. NPC1-binding, Ca(2+) and acidic pH induce a conformational change of GP2, which unmasks its fusion peptide and permit membranes fusion. Its function is as follows. Acts as a class I viral fusion protein. Under the current model, the protein has at least 3 conformational states: pre-fusion native state, pre-hairpin intermediate state, and post-fusion hairpin state. During viral and target cell membrane fusion, the coiled coil regions (heptad repeats) assume a trimer-of-hairpins structure, positioning the fusion peptide in close proximity to the C-terminal region of the ectodomain. The formation of this structure appears to drive apposition and subsequent fusion of viral and target cell membranes. Responsible for penetration of the virus into the cell cytoplasm by mediating the fusion of the membrane of the endocytosed virus particle with the endosomal membrane. Low pH in endosomes induces an irreversible conformational change in GP2, releasing the fusion hydrophobic peptide. This chain is Envelope glycoprotein (GP), found in Homo sapiens (Human).